Here is a 668-residue protein sequence, read N- to C-terminus: BTB/POZ domain-containing protein At5g66560 (668 aa).

A BTB domain is found at 21–133; the sequence is SDIEIEVDDM…CYGVKMDLSA (113 aa). Positions 73-84 are enriched in basic and acidic residues; that stretch reads ETDKKGKGHEIE. The interval 73 to 98 is disordered; the sequence is ETDKKGKGHEIEDDKEEEEVEEQEIE. A compositionally biased stretch (acidic residues) spans 85-98; sequence DDKEEEEVEEQEIE. Positions 254-530 constitute an NPH3 domain; that stretch reads ELWFEDLTQL…VQVLFFEQLQ (277 aa). At Tyr-471 the chain carries Phosphotyrosine.

The protein belongs to the NPH3 family.

The protein operates within protein modification; protein ubiquitination. Its function is as follows. May act as a substrate-specific adapter of an E3 ubiquitin-protein ligase complex (CUL3-RBX1-BTB) which mediates the ubiquitination and subsequent proteasomal degradation of target proteins. This chain is BTB/POZ domain-containing protein At5g66560, found in Arabidopsis thaliana (Mouse-ear cress).